The chain runs to 351 residues: Putative ABC transporter permease protein MJ0876 (351 aa).

A run of 9 helical transmembrane segments spans residues 4–24, 59–79, 99–119, 124–144, 152–172, 196–216, 249–269, 284–304, and 322–342; these read VGILLILFILSLILPFTALYL, LPPIIGAVLIGLTISVAGLML, VLMVVALVIFIDSLSHLFEIF, ILVAGWCGGIFSMILLIIIAL, VIIVALLLSYFFMGLRAYLIA, GDVIPMTICSIIFIIGVMFLI, FITGAIIPYVGLIAFIGIIAP, LVPATMFLGVILMVSCHILSL, and PLPIGAVLDILGGMLVVYLVY.

It belongs to the binding-protein-dependent transport system permease family. FecCD subfamily.

It localises to the cell membrane. Functionally, probably part of a binding-protein-dependent transport system. Probably responsible for the translocation of the substrate across the membrane. In Methanocaldococcus jannaschii (strain ATCC 43067 / DSM 2661 / JAL-1 / JCM 10045 / NBRC 100440) (Methanococcus jannaschii), this protein is Putative ABC transporter permease protein MJ0876.